Here is a 246-residue protein sequence, read N- to C-terminus: Protein phosphatase PhpP (246 aa).

Residues 2–240 (EISLLTDVGQ…DNITVALVSM (239 aa)) enclose the PPM-type phosphatase domain. Mn(2+) is bound by residues D36, G37, D192, and D231.

The protein belongs to the PP2C family. In terms of assembly, interacts with the kinase domain of StkP. Requires Mn(2+) as cofactor.

It is found in the cytoplasm. It catalyses the reaction O-phospho-L-seryl-[protein] + H2O = L-seryl-[protein] + phosphate. It carries out the reaction O-phospho-L-threonyl-[protein] + H2O = L-threonyl-[protein] + phosphate. With respect to regulation, phosphatase activity is inhibited by NaF but not by okadaic acid. Protein phosphatase able to dephosphorylate StkP-P and a phosphothreonine residue in a phosphopeptide synthetic substrate. PhpP and its cognate protein kinase StkP appear to constitute a functional signaling couple in vivo, PhpP's primary role probably being to control phosphorylation levels of StkP and of its targets (which include LocZ, DivIVA and KhpB (also called EloR/Jag)). PhpP thus performs an essential control of StkP activity. Overexpression confers an stkP deletion-like phenotype. The chain is Protein phosphatase PhpP (phpP) from Streptococcus pneumoniae.